Here is a 415-residue protein sequence, read N- to C-terminus: Serine hydroxymethyltransferase (415 aa).

(6S)-5,6,7,8-tetrahydrofolate-binding positions include leucine 119 and 123–125 (GHL). Lysine 228 carries the post-translational modification N6-(pyridoxal phosphate)lysine. 353 to 355 (SAF) contacts (6S)-5,6,7,8-tetrahydrofolate.

This sequence belongs to the SHMT family. In terms of assembly, homodimer. It depends on pyridoxal 5'-phosphate as a cofactor.

The protein localises to the cytoplasm. The enzyme catalyses (6R)-5,10-methylene-5,6,7,8-tetrahydrofolate + glycine + H2O = (6S)-5,6,7,8-tetrahydrofolate + L-serine. It functions in the pathway one-carbon metabolism; tetrahydrofolate interconversion. Its pathway is amino-acid biosynthesis; glycine biosynthesis; glycine from L-serine: step 1/1. Its function is as follows. Catalyzes the reversible interconversion of serine and glycine with tetrahydrofolate (THF) serving as the one-carbon carrier. Also exhibits THF-independent aldolase activity toward beta-hydroxyamino acids, producing glycine and aldehydes, via a retro-aldol mechanism. This Haloarcula marismortui (strain ATCC 43049 / DSM 3752 / JCM 8966 / VKM B-1809) (Halobacterium marismortui) protein is Serine hydroxymethyltransferase.